Here is a 20-residue protein sequence, read N- to C-terminus: M-poneritoxin-Ng1f (20 aa).

A Lysine amide modification is found at lysine 20.

As to expression, expressed by the venom gland.

It localises to the secreted. It is found in the target cell membrane. Its function is as follows. Has activity against Gram-positive bacteria. Has insecticidal and hemolytic activities. May act by disrupting the integrity of the bacterial cell membrane. The chain is M-poneritoxin-Ng1f from Neoponera goeldii (Ponerine ant).